A 122-amino-acid chain; its full sequence is Large ribosomal subunit protein uL14 (122 aa).

The protein belongs to the universal ribosomal protein uL14 family. As to quaternary structure, part of the 50S ribosomal subunit. Forms a cluster with proteins L3 and L19. In the 70S ribosome, L14 and L19 interact and together make contacts with the 16S rRNA in bridges B5 and B8.

In terms of biological role, binds to 23S rRNA. Forms part of two intersubunit bridges in the 70S ribosome. This Maricaulis maris (strain MCS10) (Caulobacter maris) protein is Large ribosomal subunit protein uL14.